The sequence spans 358 residues: Phospho-N-acetylmuramoyl-pentapeptide-transferase (358 aa).

A run of 10 helical transmembrane segments spans residues 21 to 41, 71 to 91, 95 to 115, 133 to 153, 166 to 186, 197 to 217, 234 to 254, 261 to 281, 286 to 306, and 337 to 357; these read YLTL…FVVG, TMGG…WADL, YIWV…VDDY, FWQS…ASVA, VAVN…VGSS, GLAV…AYAA, AGEL…FLWF, VFMG…LAVL, LVLF…MLQV, and IVRF…TLKI.

The protein belongs to the glycosyltransferase 4 family. MraY subfamily. It depends on Mg(2+) as a cofactor.

It localises to the cell inner membrane. It carries out the reaction UDP-N-acetyl-alpha-D-muramoyl-L-alanyl-gamma-D-glutamyl-meso-2,6-diaminopimeloyl-D-alanyl-D-alanine + di-trans,octa-cis-undecaprenyl phosphate = di-trans,octa-cis-undecaprenyl diphospho-N-acetyl-alpha-D-muramoyl-L-alanyl-D-glutamyl-meso-2,6-diaminopimeloyl-D-alanyl-D-alanine + UMP. Its pathway is cell wall biogenesis; peptidoglycan biosynthesis. Catalyzes the initial step of the lipid cycle reactions in the biosynthesis of the cell wall peptidoglycan: transfers peptidoglycan precursor phospho-MurNAc-pentapeptide from UDP-MurNAc-pentapeptide onto the lipid carrier undecaprenyl phosphate, yielding undecaprenyl-pyrophosphoryl-MurNAc-pentapeptide, known as lipid I. This chain is Phospho-N-acetylmuramoyl-pentapeptide-transferase, found in Nitrosococcus oceani (strain ATCC 19707 / BCRC 17464 / JCM 30415 / NCIMB 11848 / C-107).